A 413-amino-acid polypeptide reads, in one-letter code: MKIYLVGGAVRDALLGLTIKDKDYLVVGSTPAEMLSLGYRQVGKDFPVFLHPKNQQEYALARIERKTGTGYDGFSCDANEHVSLEEDLLRRDLTINAIAQDEQGQLHDPYGGQQDIIHKQLRHVSQAFVEDPLRVLRVARFAARFHSLGFTVATETMALMSQISLSGELEHLTAERVWQECERALATDEPQVFFEVLAQCGALEVLFPEIHALFGVPQPEKWHPEIDTGKHTLLSLKQASLLTDDMAIRFATLVHDLGKALSPKESLPKHHGHGQKGLPLIKQFCQRLRVPNDYRDLALLVSDQHQNIHNAFELKASTLVSLFDKGDFWRKPERLNGLLSACIADIRGRTGLEKSAYPQAAYIEHCFQLAKQVEVQKIIADGFIGADIKNQLNRLRILAIDEYKQSLIKKQPN.

Positions 8 and 11 each coordinate ATP. CTP is bound by residues Gly8 and Arg11. Residues Asp21 and Asp23 each contribute to the Mg(2+) site. The ATP site is built by Arg91, Arg137, and Arg140. Arg91, Arg137, and Arg140 together coordinate CTP. The HD domain occupies Thr228–Trp329.

This sequence belongs to the tRNA nucleotidyltransferase/poly(A) polymerase family. Bacterial CCA-adding enzyme type 1 subfamily. In terms of assembly, monomer. Can also form homodimers and oligomers. The cofactor is Mg(2+). Ni(2+) serves as cofactor.

It catalyses the reaction a tRNA precursor + 2 CTP + ATP = a tRNA with a 3' CCA end + 3 diphosphate. The catalysed reaction is a tRNA with a 3' CCA end + 2 CTP + ATP = a tRNA with a 3' CCACCA end + 3 diphosphate. In terms of biological role, catalyzes the addition and repair of the essential 3'-terminal CCA sequence in tRNAs without using a nucleic acid template. Adds these three nucleotides in the order of C, C, and A to the tRNA nucleotide-73, using CTP and ATP as substrates and producing inorganic pyrophosphate. tRNA 3'-terminal CCA addition is required both for tRNA processing and repair. Also involved in tRNA surveillance by mediating tandem CCA addition to generate a CCACCA at the 3' terminus of unstable tRNAs. While stable tRNAs receive only 3'-terminal CCA, unstable tRNAs are marked with CCACCA and rapidly degraded. This chain is Multifunctional CCA protein, found in Shewanella denitrificans (strain OS217 / ATCC BAA-1090 / DSM 15013).